We begin with the raw amino-acid sequence, 318 residues long: Olfactory receptor-like protein COR3 (318 aa).

The Extracellular portion of the chain corresponds to 1-26 (MASGNCTTPTTFILSGLTDNPGLQMP). N-linked (GlcNAc...) asparagine glycosylation is present at N5. Residues 27-49 (LFMVFLAIYTITLLTNLGLIRLI) traverse the membrane as a helical segment. Over 50–57 (SVDLHLQT) the chain is Cytoplasmic. Residues 58–79 (PMYIFLQNLSFTDAAYSTVITP) traverse the membrane as a helical segment. Over 80 to 100 (KMLATFLEERKTISYVGCILQ) the chain is Extracellular. Residues C97 and C179 are joined by a disulfide bond. Residues 101-120 (YFSFVLLTTSECLLLAVMAY) traverse the membrane as a helical segment. Residues 121-139 (DRYVAICKPLLYPAIMTKA) are Cytoplasmic-facing. A helical membrane pass occupies residues 140–164 (VCWRLVESLYFLAFLNSLVHTCGLL). Topologically, residues 165 to 205 (KLSFCYSNVVNHFFCDISPLFQISSSSIAISELLVIISGSL) are extracellular. A helical transmembrane segment spans residues 206–226 (FVMSSIIIILISYVFIILTVV). The Cytoplasmic segment spans residues 227 to 239 (MIRSKDGKYKAFS). Residues 240–260 (TCTSHLMAVSLFHGTVIFMYL) form a helical membrane-spanning segment. The Extracellular segment spans residues 261-271 (RPVKLFSLDTD). Residues 272–292 (KIASLFYTVVIPMLNPLIYSW) traverse the membrane as a helical segment. Residues 293–318 (RNKEVKDALRRLTATTFGFIDSKAVQ) lie on the Cytoplasmic side of the membrane.

Belongs to the G-protein coupled receptor 1 family.

It is found in the cell membrane. Its function is as follows. Odorant receptor. The chain is Olfactory receptor-like protein COR3 (COR3) from Gallus gallus (Chicken).